Consider the following 313-residue polypeptide: Putative stilbene synthase 2 (313 aa).

The active site involves Cys-88. Residues Leu-191 and Gly-229 to Pro-231 each bind substrate.

It belongs to the thiolase-like superfamily. Chalcone/stilbene synthases family. As to quaternary structure, homodimer.

It is found in the cytoplasm. The catalysed reaction is 4-coumaroyl-CoA + 3 malonyl-CoA + 3 H(+) = trans-resveratrol + 4 CO2 + 4 CoA. It functions in the pathway phytoalexin biosynthesis; 3,4',5-trihydroxystilbene biosynthesis; 3,4',5-trihydroxystilbene from trans-4-coumarate: step 2/2. The polypeptide is Putative stilbene synthase 2 (Arachis hypogaea (Peanut)).